A 92-amino-acid chain; its full sequence is UPF0250 protein CGSHiEE_03170 (92 aa).

Belongs to the UPF0250 family.

This is UPF0250 protein CGSHiEE_03170 from Haemophilus influenzae (strain PittEE).